The primary structure comprises 544 residues: WD repeat-containing protein 25 (544 aa).

Disordered regions lie at residues Asp-17–Gly-74 and Gln-183–Pro-208. Over residues Phe-30–Thr-39 the composition is skewed to polar residues. 7 WD repeats span residues Gly-244 to Gln-286, Leu-290 to Ser-329, Gly-330 to Lys-373, Thr-375 to Asn-420, His-424 to Arg-463, Gly-469 to Thr-510, and Gly-513 to His-544.

Expressed in heart, muscle, testis, ovary, uterus and prostate.

In Homo sapiens (Human), this protein is WD repeat-containing protein 25.